We begin with the raw amino-acid sequence, 479 residues long: Probable glycine dehydrogenase (decarboxylating) subunit 2 (479 aa).

Position 265 is an N6-(pyridoxal phosphate)lysine (lysine 265).

The protein belongs to the GcvP family. C-terminal subunit subfamily. In terms of assembly, the glycine cleavage system is composed of four proteins: P, T, L and H. In this organism, the P 'protein' is a heterodimer of two subunits. It depends on pyridoxal 5'-phosphate as a cofactor.

The enzyme catalyses N(6)-[(R)-lipoyl]-L-lysyl-[glycine-cleavage complex H protein] + glycine + H(+) = N(6)-[(R)-S(8)-aminomethyldihydrolipoyl]-L-lysyl-[glycine-cleavage complex H protein] + CO2. In terms of biological role, the glycine cleavage system catalyzes the degradation of glycine. The P protein binds the alpha-amino group of glycine through its pyridoxal phosphate cofactor; CO(2) is released and the remaining methylamine moiety is then transferred to the lipoamide cofactor of the H protein. The sequence is that of Probable glycine dehydrogenase (decarboxylating) subunit 2 from Pseudothermotoga lettingae (strain ATCC BAA-301 / DSM 14385 / NBRC 107922 / TMO) (Thermotoga lettingae).